We begin with the raw amino-acid sequence, 42 residues long: Photosystem I reaction center subunit IX (42 aa).

Residues 7 to 27 form a helical membrane-spanning segment; sequence YLSVAPVLSTLWFGILAGLLI.

It belongs to the PsaJ family.

The protein resides in the plastid. It is found in the chloroplast thylakoid membrane. In terms of biological role, may help in the organization of the PsaE and PsaF subunits. The chain is Photosystem I reaction center subunit IX from Lemna minor (Common duckweed).